A 198-amino-acid chain; its full sequence is Shikimate kinase (198 aa).

Residue 26–31 coordinates ATP; sequence GSGKSQ. Position 30 (S30) interacts with Mg(2+). Positions 48, 72, and 94 each coordinate substrate. ATP is bound at residue R132. Substrate is bound at residue R151. Position 167 (Q167) interacts with ATP.

Belongs to the shikimate kinase family. Monomer. Mg(2+) serves as cofactor.

It localises to the cytoplasm. The enzyme catalyses shikimate + ATP = 3-phosphoshikimate + ADP + H(+). It participates in metabolic intermediate biosynthesis; chorismate biosynthesis; chorismate from D-erythrose 4-phosphate and phosphoenolpyruvate: step 5/7. Its function is as follows. Catalyzes the specific phosphorylation of the 3-hydroxyl group of shikimic acid using ATP as a cosubstrate. This Prochlorococcus marinus (strain NATL2A) protein is Shikimate kinase.